The chain runs to 255 residues: tRNA (guanine-N(1)-)-methyltransferase (255 aa).

Residues Gly113 and 133-138 contribute to the S-adenosyl-L-methionine site; that span reads IGDYVL.

The protein belongs to the RNA methyltransferase TrmD family. As to quaternary structure, homodimer.

It is found in the cytoplasm. The enzyme catalyses guanosine(37) in tRNA + S-adenosyl-L-methionine = N(1)-methylguanosine(37) in tRNA + S-adenosyl-L-homocysteine + H(+). Specifically methylates guanosine-37 in various tRNAs. This is tRNA (guanine-N(1)-)-methyltransferase from Salmonella paratyphi A (strain ATCC 9150 / SARB42).